The following is a 44-amino-acid chain: Non-structural protein 7b (44 aa).

A helical membrane pass occupies residues 9–29; it reads FYLCFLAFLLFLVLIMLIIFW.

Its subcellular location is the host membrane. The protein is Non-structural protein 7b of Bat coronavirus Rp3/2004 (BtCoV/Rp3/2004).